Reading from the N-terminus, the 394-residue chain is Protein TsgA homolog (394 aa).

Transmembrane regions (helical) follow at residues 11-31 (WISF…GMVM), 51-71 (FLNA…EIVP), 78-98 (FGFV…SIAL), 101-121 (VSMF…TFLI), 134-154 (LLFT…VAAV), 162-182 (WYWV…LTFG), 206-226 (IGVL…LGFI), 250-270 (FWMS…FFDL), 273-293 (ILTV…NGAP), 297-317 (AWFI…IITL), 332-352 (FVLT…GPIV), and 361-381 (LQTA…LGFV).

The protein belongs to the major facilitator superfamily. TsgA family.

Its subcellular location is the cell inner membrane. The sequence is that of Protein TsgA homolog from Enterobacter sp. (strain 638).